Consider the following 539-residue polypeptide: Chaperonin GroEL (539 aa).

ATP is bound by residues 29 to 32 (TLGP), 86 to 90 (DGTTT), Gly413, 476 to 478 (NAA), and Asp492.

Belongs to the chaperonin (HSP60) family. As to quaternary structure, forms a cylinder of 14 subunits composed of two heptameric rings stacked back-to-back. Interacts with the co-chaperonin GroES.

It is found in the cytoplasm. The enzyme catalyses ATP + H2O + a folded polypeptide = ADP + phosphate + an unfolded polypeptide.. Functionally, together with its co-chaperonin GroES, plays an essential role in assisting protein folding. The GroEL-GroES system forms a nano-cage that allows encapsulation of the non-native substrate proteins and provides a physical environment optimized to promote and accelerate protein folding. The protein is Chaperonin GroEL of Streptococcus thermophilus (strain CNRZ 1066).